A 106-amino-acid polypeptide reads, in one-letter code: Large ribosomal subunit protein bL21 (106 aa).

Belongs to the bacterial ribosomal protein bL21 family. Part of the 50S ribosomal subunit. Contacts protein L20.

Its function is as follows. This protein binds to 23S rRNA in the presence of protein L20. The sequence is that of Large ribosomal subunit protein bL21 from Fervidobacterium nodosum (strain ATCC 35602 / DSM 5306 / Rt17-B1).